The primary structure comprises 1002 residues: Hypoxia up-regulated protein 1 (1002 aa).

Positions 1–23 (MARAPRWMLGWLLLACCVPHTEP) are cleaved as a signal peptide. Disordered stretches follow at residues 576 to 698 (LFGG…PKKQ) and 918 to 1002 (KPKP…NDEL). The span at 643–675 (PPKEESQKNEEGEKSEARDPKEDKETVNEEELS) shows a compositional bias: basic and acidic residues. Polar residues predominate over residues 933–947 (GKNATGTSESENTIP). Basic and acidic residues-rich tracts occupy residues 951–962 (GKQEEKPEDISP) and 983–1002 (SSKK…NDEL). Positions 999–1002 (NDEL) match the Prevents secretion from ER motif.

The protein belongs to the heat shock protein 70 family.

The protein resides in the endoplasmic reticulum lumen. Has a pivotal role in cytoprotective cellular mechanisms triggered by oxygen deprivation. Promotes HSPA5/BiP-mediated ATP nucleotide exchange and thereby activates the unfolded protein response (UPR) pathway in the presence of endoplasmic reticulum stress. May play a role as a molecular chaperone and participate in protein folding. This chain is Hypoxia up-regulated protein 1 (HYOU1), found in Gallus gallus (Chicken).